Consider the following 305-residue polypeptide: tRNA uridine(34) hydroxylase (305 aa).

A Rhodanese domain is found at 125 to 219 (ADENTVVVDK…YLEEVPREQS (95 aa)). Cysteine 179 acts as the Cysteine persulfide intermediate in catalysis.

The protein belongs to the TrhO family.

The enzyme catalyses uridine(34) in tRNA + AH2 + O2 = 5-hydroxyuridine(34) in tRNA + A + H2O. Its function is as follows. Catalyzes oxygen-dependent 5-hydroxyuridine (ho5U) modification at position 34 in tRNAs. The sequence is that of tRNA uridine(34) hydroxylase from Brucella abortus (strain S19).